Here is a 307-residue protein sequence, read N- to C-terminus: S-methyl-5'-thioadenosine phosphorylase (307 aa).

Phosphate-binding positions include threonine 20, 62 to 63, and 95 to 96; these read RH and SA. Methionine 197 serves as a coordination point for substrate. Serine 198 serves as a coordination point for phosphate. 221–223 serves as a coordination point for substrate; the sequence is DYD.

This sequence belongs to the PNP/MTAP phosphorylase family. MTAP subfamily. In terms of assembly, homotrimer.

It localises to the cytoplasm. Its subcellular location is the nucleus. It catalyses the reaction S-methyl-5'-thioadenosine + phosphate = 5-(methylsulfanyl)-alpha-D-ribose 1-phosphate + adenine. The protein operates within amino-acid biosynthesis; L-methionine biosynthesis via salvage pathway; S-methyl-5-thio-alpha-D-ribose 1-phosphate from S-methyl-5'-thioadenosine (phosphorylase route): step 1/1. Catalyzes the reversible phosphorylation of S-methyl-5'-thioadenosine (MTA) to adenine and 5-methylthioribose-1-phosphate. Involved in the breakdown of MTA, a major by-product of polyamine biosynthesis. Responsible for the first step in the methionine salvage pathway after MTA has been generated from S-adenosylmethionine. Has broad substrate specificity with 6-aminopurine nucleosides as preferred substrates. The chain is S-methyl-5'-thioadenosine phosphorylase from Fusarium vanettenii (strain ATCC MYA-4622 / CBS 123669 / FGSC 9596 / NRRL 45880 / 77-13-4) (Fusarium solani subsp. pisi).